The following is a 356-amino-acid chain: MDLVFRPERYPFLTQDLPGVGGEIRVEPEDFQVEEVPAYLPKGEGEHLYFLLEKEGRTTREVLEFLRDEVGVPEKEIGVAGLKDKRAKTRQWFSIPRKYEDALCLLENLQGVRLLAADLHTNKLRTGHLKGNRFHILIRRPKGGVAEAEAVLKRLAEKGVPNYYGPQRFGLGGLNPVRGYKLVKEGKGRGSPWLKRFLIGSLQSLLFNDWVALRMALGLYDRVVLGDWAKKHATGGEFLVEDPGEAERALRLEISATGPLFGKKYPEAQGEARAIEDEVLARYGLKREEFRARRGARRPIRVPLAEWKVEEAPEGLWLSFFLPKGSYATSLLREVMKVEALDHLEAEPAPEDAEGL.

D84 serves as the catalytic Nucleophile. Positions 159-302 (GVPNYYGPQR…RRGARRPIRV (144 aa)) constitute a TRUD domain.

Belongs to the pseudouridine synthase TruD family.

It carries out the reaction uridine(13) in tRNA = pseudouridine(13) in tRNA. Its function is as follows. Responsible for synthesis of pseudouridine from uracil-13 in transfer RNAs. In Thermus thermophilus (strain ATCC BAA-163 / DSM 7039 / HB27), this protein is tRNA pseudouridine synthase D.